The following is a 382-amino-acid chain: Protein MGF 360-4L (382 aa).

Belongs to the asfivirus MGF 360 family.

Its function is as follows. Plays a role in virus cell tropism, and may be required for efficient virus replication in macrophages. The chain is Protein MGF 360-4L from Ornithodoros (relapsing fever ticks).